The chain runs to 295 residues: NAD kinase (295 aa).

Residue D74 is the Proton acceptor of the active site. Residues 74-75 (DG), 148-149 (ND), H159, R176, D178, and 189-194 (TAYALS) contribute to the NAD(+) site.

The protein belongs to the NAD kinase family. The cofactor is a divalent metal cation.

The protein resides in the cytoplasm. It catalyses the reaction NAD(+) + ATP = ADP + NADP(+) + H(+). Its function is as follows. Involved in the regulation of the intracellular balance of NAD and NADP, and is a key enzyme in the biosynthesis of NADP. Catalyzes specifically the phosphorylation on 2'-hydroxyl of the adenosine moiety of NAD to yield NADP. This is NAD kinase from Legionella pneumophila (strain Corby).